The sequence spans 154 residues: Crossover junction endodeoxyribonuclease RuvC (154 aa).

Catalysis depends on residues Asp-7, Glu-67, and Asp-139. Mg(2+) contacts are provided by Asp-7, Glu-67, and Asp-139.

Belongs to the RuvC family. In terms of assembly, homodimer which binds Holliday junction (HJ) DNA. The HJ becomes 2-fold symmetrical on binding to RuvC with unstacked arms; it has a different conformation from HJ DNA in complex with RuvA. In the full resolvosome a probable DNA-RuvA(4)-RuvB(12)-RuvC(2) complex forms which resolves the HJ. Requires Mg(2+) as cofactor.

It localises to the cytoplasm. It catalyses the reaction Endonucleolytic cleavage at a junction such as a reciprocal single-stranded crossover between two homologous DNA duplexes (Holliday junction).. Its function is as follows. The RuvA-RuvB-RuvC complex processes Holliday junction (HJ) DNA during genetic recombination and DNA repair. Endonuclease that resolves HJ intermediates. Cleaves cruciform DNA by making single-stranded nicks across the HJ at symmetrical positions within the homologous arms, yielding a 5'-phosphate and a 3'-hydroxyl group; requires a central core of homology in the junction. The consensus cleavage sequence is 5'-(A/T)TT(C/G)-3'. Cleavage occurs on the 3'-side of the TT dinucleotide at the point of strand exchange. HJ branch migration catalyzed by RuvA-RuvB allows RuvC to scan DNA until it finds its consensus sequence, where it cleaves and resolves the cruciform DNA. The polypeptide is Crossover junction endodeoxyribonuclease RuvC (Prochlorococcus marinus (strain NATL2A)).